A 338-amino-acid chain; its full sequence is 1-aminocyclopropane-1-carboxylate deaminase (338 aa).

K51 carries the post-translational modification N6-(pyridoxal phosphate)lysine. The active-site Nucleophile is S78.

It belongs to the ACC deaminase/D-cysteine desulfhydrase family. As to quaternary structure, homotrimer. The cofactor is pyridoxal 5'-phosphate.

It carries out the reaction 1-aminocyclopropane-1-carboxylate + H2O = 2-oxobutanoate + NH4(+). In terms of biological role, catalyzes a cyclopropane ring-opening reaction, the irreversible conversion of 1-aminocyclopropane-1-carboxylate (ACC) to ammonia and alpha-ketobutyrate. Allows growth on ACC as a nitrogen source. The chain is 1-aminocyclopropane-1-carboxylate deaminase from Ralstonia pickettii (strain 12J).